The sequence spans 145 residues: Synaptojanin-2-binding protein (145 aa).

At M1–G117 the chain is on the cytoplasmic side. The region spanning E13–L100 is the PDZ domain. A helical; Anchor for type IV membrane protein transmembrane segment spans residues I118 to F138. Topologically, residues M139–L145 are mitochondrial intermembrane.

In terms of assembly, binds (via the PDZ domain) to isoform 2A of SYNJ2 (via the unique motif in the C-terminus). Interacts (via C-terminus) with RALBP1. Interacts (via PDZ domain) with ACVR2A (via C-terminus) and ACVR2B (via C-terminus). Forms a ternary complex with ACVR2A and RALBP1. Interacts with MAPK12. Interacts with DLL1; enhances DLL1 protein stability, and promotes notch signaling in endothelial cells.

The protein resides in the mitochondrion outer membrane. Its subcellular location is the cytoplasm. It localises to the perinuclear region. In terms of biological role, regulates endocytosis of activin type 2 receptor kinases through the Ral/RALBP1-dependent pathway and may be involved in suppression of activin-induced signal transduction. The chain is Synaptojanin-2-binding protein from Bos taurus (Bovine).